A 493-amino-acid polypeptide reads, in one-letter code: UDP-N-acetylmuramoyl-L-alanyl-D-glutamate--L-lysine ligase (493 aa).

Ser-30 contacts UDP-N-acetyl-alpha-D-muramoyl-L-alanyl-D-glutamate. Gly-110–Ser-116 lines the ATP pocket. Residues Asn-151, Thr-152–Thr-153, Ser-179, and Arg-187 contribute to the UDP-N-acetyl-alpha-D-muramoyl-L-alanyl-D-glutamate site. Position 219 is an N6-carboxylysine (Lys-219). The short motif at Asp-406 to Ala-409 is the L-lysine recognition motif element.

Belongs to the MurCDEF family. MurE subfamily. Mg(2+) serves as cofactor. Carboxylation is probably crucial for Mg(2+) binding and, consequently, for the gamma-phosphate positioning of ATP.

Its subcellular location is the cytoplasm. It carries out the reaction UDP-N-acetyl-alpha-D-muramoyl-L-alanyl-D-glutamate + L-lysine + ATP = UDP-N-acetyl-alpha-D-muramoyl-L-alanyl-gamma-D-glutamyl-L-lysine + ADP + phosphate + H(+). It functions in the pathway cell wall biogenesis; peptidoglycan biosynthesis. In terms of biological role, catalyzes the addition of L-lysine to the nucleotide precursor UDP-N-acetylmuramoyl-L-alanyl-D-glutamate (UMAG) in the biosynthesis of bacterial cell-wall peptidoglycan. Cannot use diaminopimelate as substrate. Can accept L-ornithine as substrate, but the efficiency is 400-fold lower than that with L-lysine. Seems to have a role in beta-lactam antibiotic resistance. In Staphylococcus aureus (strain NCTC 8325 / PS 47), this protein is UDP-N-acetylmuramoyl-L-alanyl-D-glutamate--L-lysine ligase.